A 20-amino-acid chain; its full sequence is Flagellar filament 33 kDa core protein (20 aa).

The protein belongs to the bacterial flagellin family. As to quaternary structure, the flagellum consists of an outer layer composed of repeating units of FlaA around a core that contains one or all of five antigenically related polypeptides.

It localises to the periplasmic flagellum. It is found in the periplasm. In terms of biological role, component of the core of the flagella. In Spirochaeta aurantia, this protein is Flagellar filament 33 kDa core protein.